A 98-amino-acid chain; its full sequence is NADH-ubiquinone oxidoreductase chain 4L (98 aa).

The next 3 membrane-spanning stretches (helical) occupy residues Met-1 to Ile-21, Leu-30 to Thr-50, and Ile-61 to Ile-81.

The protein belongs to the complex I subunit 4L family. In terms of assembly, core subunit of respiratory chain NADH dehydrogenase (Complex I) which is composed of 45 different subunits.

Its subcellular location is the mitochondrion inner membrane. The enzyme catalyses a ubiquinone + NADH + 5 H(+)(in) = a ubiquinol + NAD(+) + 4 H(+)(out). In terms of biological role, core subunit of the mitochondrial membrane respiratory chain NADH dehydrogenase (Complex I) which catalyzes electron transfer from NADH through the respiratory chain, using ubiquinone as an electron acceptor. Part of the enzyme membrane arm which is embedded in the lipid bilayer and involved in proton translocation. The polypeptide is NADH-ubiquinone oxidoreductase chain 4L (MT-ND4L) (Gulo gulo (Wolverine)).